The primary structure comprises 395 residues: 1-deoxy-D-xylulose 5-phosphate reductoisomerase (395 aa).

Residues Thr-10, Gly-11, Ser-12, Ile-13, Asn-38, and Asn-123 each contribute to the NADPH site. Lys-124 is a 1-deoxy-D-xylulose 5-phosphate binding site. Glu-125 serves as a coordination point for NADPH. A Mn(2+)-binding site is contributed by Asp-149. Residues Ser-150, Glu-151, Ser-185, and His-208 each contribute to the 1-deoxy-D-xylulose 5-phosphate site. Glu-151 provides a ligand contact to Mn(2+). Residue Gly-214 coordinates NADPH. Residues Ser-221, Asn-226, Lys-227, and Glu-230 each contribute to the 1-deoxy-D-xylulose 5-phosphate site. Glu-230 serves as a coordination point for Mn(2+).

The protein belongs to the DXR family. Mg(2+) serves as cofactor. It depends on Mn(2+) as a cofactor.

The catalysed reaction is 2-C-methyl-D-erythritol 4-phosphate + NADP(+) = 1-deoxy-D-xylulose 5-phosphate + NADPH + H(+). It functions in the pathway isoprenoid biosynthesis; isopentenyl diphosphate biosynthesis via DXP pathway; isopentenyl diphosphate from 1-deoxy-D-xylulose 5-phosphate: step 1/6. Its function is as follows. Catalyzes the NADPH-dependent rearrangement and reduction of 1-deoxy-D-xylulose-5-phosphate (DXP) to 2-C-methyl-D-erythritol 4-phosphate (MEP). In Shewanella woodyi (strain ATCC 51908 / MS32), this protein is 1-deoxy-D-xylulose 5-phosphate reductoisomerase.